We begin with the raw amino-acid sequence, 103 residues long: UPF0145 protein Dred_2155 (103 aa).

Belongs to the UPF0145 family.

The polypeptide is UPF0145 protein Dred_2155 (Desulforamulus reducens (strain ATCC BAA-1160 / DSM 100696 / MI-1) (Desulfotomaculum reducens)).